The following is a 329-amino-acid chain: Putative dehydrogenase RB0419 (329 aa).

This sequence belongs to the ornithine cyclodeaminase/mu-crystallin family.

The protein is Putative dehydrogenase RB0419 of Rhizobium meliloti (strain 1021) (Ensifer meliloti).